The following is a 599-amino-acid chain: Cytochrome P450 monooxygenase ALT8 (599 aa).

A run of 2 helical transmembrane segments spans residues 4-21 (LACVGAAAMACALAVYLG) and 36-56 (ILFGCSGLWYVWKGLLWPAYF). N127 carries N-linked (GlcNAc...) asparagine glycosylation. The span at 495-504 (DDSSAASPSF) shows a compositional bias: low complexity. Residues 495-522 (DDSSAASPSFGGSGKRKSQYTDTHKEPS) are disordered. C539 is a heme binding site.

This sequence belongs to the cytochrome P450 family. The cofactor is heme.

The protein resides in the membrane. The protein operates within secondary metabolite biosynthesis. Its function is as follows. Cytochrome P450 monooxygenase; part of the gene cluster that mediates the biosynthesis of the host-selective toxins (HSTs) AAL-toxins, sphinganine-analog mycotoxins responsible for Alternaria stem canker on tomato by the tomato pathotype. The biosynthesis starts with the polyketide synthase ALT1-catalyzed C-16 carbon chain assembly from one starter acetyl-CoA unit with malonyl-CoA extender units. ALT1 also selectively transfers methyl groups at the first and the third cycle of chain elongation for AAL toxin. The C-16 polyketide chain is released from the enzyme by a nucleophilic attack of a carbanion, which is derived from R-carbon of glycin by decarboxylation, on the carbonyl carbon of polyketide acyl chain. This step is probably catalyzed by a pyridoxal 5'-phosphate-dependent aminoacyl transferase ALT4. The respective functions of the other enzymes encoded by the cluster have still to be elucidated. The sphingosine N-acyltransferase-like protein ALT7 seems not to act as a resistance/self-tolerance factor against the toxin in the toxin biosynthetic gene cluster, contrary to what is expected. The protein is Cytochrome P450 monooxygenase ALT8 of Alternaria alternata (Alternaria rot fungus).